A 348-amino-acid chain; its full sequence is Erythronate-4-phosphate dehydrogenase (348 aa).

The substrate site is built by T46 and T67. NAD(+) is bound at residue D147. R209 is an active-site residue. D233 contributes to the NAD(+) binding site. Residue E238 is part of the active site. H255 functions as the Proton donor in the catalytic mechanism. G258 serves as a coordination point for NAD(+). Y259 serves as a coordination point for substrate.

The protein belongs to the D-isomer specific 2-hydroxyacid dehydrogenase family. PdxB subfamily. As to quaternary structure, homodimer.

The protein localises to the cytoplasm. The enzyme catalyses 4-phospho-D-erythronate + NAD(+) = (R)-3-hydroxy-2-oxo-4-phosphooxybutanoate + NADH + H(+). It functions in the pathway cofactor biosynthesis; pyridoxine 5'-phosphate biosynthesis; pyridoxine 5'-phosphate from D-erythrose 4-phosphate: step 2/5. Catalyzes the oxidation of erythronate-4-phosphate to 3-hydroxy-2-oxo-4-phosphonooxybutanoate. The chain is Erythronate-4-phosphate dehydrogenase from Bacteroides fragilis (strain ATCC 25285 / DSM 2151 / CCUG 4856 / JCM 11019 / LMG 10263 / NCTC 9343 / Onslow / VPI 2553 / EN-2).